The sequence spans 427 residues: Ceramide Synthase FUM18 (427 aa).

Asn20 carries N-linked (GlcNAc...) asparagine glycosylation. 6 helical membrane passes run 38 to 58 (ILPL…IHIS), 131 to 151 (EQGW…LIWA), 173 to 193 (GLIK…VISV), 202 to 222 (YWLN…CYVY), 250 to 270 (YLGF…TWIV), and 335 to 355 (VSIL…FGFI). The TLC domain maps to 124–364 (RKVVRFSEQG…ICKVAIGVLD (241 aa)). Positions 373-406 (SDVESDEEDSEPVANGSGWQQSQLQPGRRVGSNG) are disordered. The N-linked (GlcNAc...) asparagine glycan is linked to Asn387.

This sequence belongs to the sphingosine N-acyltransferase family.

Its subcellular location is the endoplasmic reticulum membrane. It participates in mycotoxin biosynthesis. Ceramide synthase; part of the gene cluster that mediates the biosynthesis of fumonisins B1 (FB1), B2 (FB2), B3 (FB3), and B4 (FB4), which are carcinogenic mycotoxins. Plays a role in self-protection from FB1 toxicity by contributing to ceramide synthesis. The biosynthesis starts with the FUM1-catalyzed carbon chain assembly from one molecule of acetyl-CoA, eight molecules of malonyl-CoA, and two molecules of methionine (in S-adenosyl form). The C18 polyketide chain is released from the enzyme by a nucleophilic attack of a carbanion, which is derived from R-carbon of alanine by decarboxylation, on the carbonyl carbon of polyketide acyl chain. This step is catalyzed by the pyridoxal 5'-phosphate-dependent aminoacyl transferase FUM8. The resultant 3-keto intermediate is then stereospecifically reduced to a 3-hydroxyl product by reductase FUM13. Subsequent oxidations at C-10 by the cytochrome P450 monooxygenase FUM2, C-14 and C-15 by FUM6, FUM12 or FUM15, tricarballylic esterification of the hydroxyl groups on C-14 and C-15 by acyltransferase FUM14, and C-5 hydroxylation by 2-keto-glutarate-dependent dioxygenase FUM3 furnish the biosynthesis of fumonisins. The tricarballylic moieties are most likely derived from the citric acid cycle, and their addition to the carbon backbone may involve FUM7, FUM10, FUM11 and FUM14. The chain is Ceramide Synthase FUM18 from Gibberella moniliformis (strain M3125 / FGSC 7600) (Maize ear and stalk rot fungus).